The chain runs to 737 residues: Ribosome-releasing factor 2, mitochondrial (737 aa).

The N-terminal 29 residues, 1-29 (MLKYALHSGGMPRNRLLRQLSAHIFRRSY), are a transit peptide targeting the mitochondrion. The tr-type G domain occupies 31–310 (SNIRNIGILA…AVNTYLPAPE (280 aa)). GTP contacts are provided by residues 40–47 (AHIDAGKT), 104–108 (DTPGH), and 158–161 (NKMD).

The protein belongs to the TRAFAC class translation factor GTPase superfamily. Classic translation factor GTPase family. EF-G/EF-2 subfamily.

Its subcellular location is the mitochondrion. In terms of biological role, mitochondrial GTPase that mediates the disassembly of ribosomes from messenger RNA at the termination of mitochondrial protein biosynthesis. Not involved in the GTP-dependent ribosomal translocation step during translation elongation. In Drosophila pseudoobscura pseudoobscura (Fruit fly), this protein is Ribosome-releasing factor 2, mitochondrial.